The primary structure comprises 632 residues: 1-deoxy-D-xylulose-5-phosphate synthase (632 aa).

Positions 1 to 25 (MPTTFHEIPRKRPTTPLLDRANTPD) are disordered. Residues His-87 and 128–130 (GHS) contribute to the thiamine diphosphate site. Asp-159 lines the Mg(2+) pocket. Thiamine diphosphate contacts are provided by residues 160 to 161 (GA), Asn-188, Phe-295, and Glu-378. Asn-188 contributes to the Mg(2+) binding site.

It belongs to the transketolase family. DXPS subfamily. In terms of assembly, homodimer. Mg(2+) is required as a cofactor. The cofactor is thiamine diphosphate.

The catalysed reaction is D-glyceraldehyde 3-phosphate + pyruvate + H(+) = 1-deoxy-D-xylulose 5-phosphate + CO2. The protein operates within metabolic intermediate biosynthesis; 1-deoxy-D-xylulose 5-phosphate biosynthesis; 1-deoxy-D-xylulose 5-phosphate from D-glyceraldehyde 3-phosphate and pyruvate: step 1/1. In terms of biological role, catalyzes the acyloin condensation reaction between C atoms 2 and 3 of pyruvate and glyceraldehyde 3-phosphate to yield 1-deoxy-D-xylulose-5-phosphate (DXP). This Pseudomonas fluorescens (strain Pf0-1) protein is 1-deoxy-D-xylulose-5-phosphate synthase.